Reading from the N-terminus, the 149-residue chain is UPF0260 protein PSPTO_3918 (149 aa).

This sequence belongs to the UPF0260 family.

This chain is UPF0260 protein PSPTO_3918, found in Pseudomonas syringae pv. tomato (strain ATCC BAA-871 / DC3000).